We begin with the raw amino-acid sequence, 583 residues long: Pyruvate kinase isozyme A, chloroplastic (583 aa).

Residues 1–74 constitute a chloroplast transit peptide; the sequence is MSQSLHFSPN…NSGVLYNNNN (74 aa). Over residues 43–52 the composition is skewed to low complexity; sequence KASTSPSSSS. Positions 43-75 are disordered; the sequence is KASTSPSSSSDPQVLVADNGTGNSGVLYNNNNK. Positions 62–75 are enriched in polar residues; sequence GTGNSGVLYNNNNK. Arg-134 is a substrate binding site. The K(+) site is built by Asn-136, Asp-168, and Thr-169. 136–139 contacts ATP; the sequence is NMCH. Position 333 (Glu-333) interacts with Mg(2+). Gly-356, Asp-357, and Ser-389 together coordinate substrate. Mg(2+) is bound at residue Asp-357.

It belongs to the pyruvate kinase family. As to quaternary structure, oligomer of alpha and beta subunits. Mg(2+) is required as a cofactor. K(+) serves as cofactor.

Its subcellular location is the plastid. The protein resides in the chloroplast. The enzyme catalyses pyruvate + ATP = phosphoenolpyruvate + ADP + H(+). It functions in the pathway carbohydrate degradation; glycolysis; pyruvate from D-glyceraldehyde 3-phosphate: step 5/5. The sequence is that of Pyruvate kinase isozyme A, chloroplastic from Ricinus communis (Castor bean).